A 177-amino-acid polypeptide reads, in one-letter code: Small ribosomal subunit protein uS4 (177 aa).

The 65-residue stretch at 104–168 (RRLQTLVFRK…SPMASESHPE (65 aa)) folds into the S4 RNA-binding domain. A disordered region spans residues 157–177 (PNSPMASESHPERTDSVKDAE). Over residues 165 to 177 (SHPERTDSVKDAE) the composition is skewed to basic and acidic residues.

This sequence belongs to the universal ribosomal protein uS4 family. Part of the 30S ribosomal subunit. Contacts protein S5. The interaction surface between S4 and S5 is involved in control of translational fidelity.

One of the primary rRNA binding proteins, it binds directly to 16S rRNA where it nucleates assembly of the body of the 30S subunit. In terms of biological role, with S5 and S12 plays an important role in translational accuracy. The sequence is that of Small ribosomal subunit protein uS4 from Methanococcus aeolicus (strain ATCC BAA-1280 / DSM 17508 / OCM 812 / Nankai-3).